Consider the following 38-residue polypeptide: Odorant-binding protein 2 (38 aa).

This sequence belongs to the calycin superfamily. Lipocalin family. As to expression, nasal mucosa.

The protein resides in the secreted. It is found in the extracellular space. Functionally, this soluble protein may play a specific role in odor discrimination and perception. This chain is Odorant-binding protein 2, found in Hystrix cristata (North African crested porcupine).